The following is a 250-amino-acid chain: Coproheme decarboxylase (250 aa).

Fe-coproporphyrin III is bound by residues R131, 145–149 (YPMNK), H172, and Q185. Y145 is a catalytic residue.

Belongs to the ChdC family. Type 1 subfamily. The cofactor is Fe-coproporphyrin III.

It carries out the reaction Fe-coproporphyrin III + 2 H2O2 + 2 H(+) = heme b + 2 CO2 + 4 H2O. The enzyme catalyses Fe-coproporphyrin III + H2O2 + H(+) = harderoheme III + CO2 + 2 H2O. It catalyses the reaction harderoheme III + H2O2 + H(+) = heme b + CO2 + 2 H2O. The protein operates within porphyrin-containing compound metabolism; protoheme biosynthesis. Involved in coproporphyrin-dependent heme b biosynthesis. Catalyzes the decarboxylation of Fe-coproporphyrin III (coproheme) to heme b (protoheme IX), the last step of the pathway. The reaction occurs in a stepwise manner with a three-propionate intermediate. The polypeptide is Coproheme decarboxylase (Staphylococcus aureus (strain bovine RF122 / ET3-1)).